A 1113-amino-acid chain; its full sequence is StAR-related lipid transfer protein 13 (1113 aa).

M1 bears the N-acetylmethionine mark. The region spanning 55 to 122 is the SAM domain; it reads QQEIEAKEAC…LNKCASMKLD (68 aa). Disordered stretches follow at residues 162 to 254 and 307 to 346; these read LLPR…PTRA and PNGD…VSTP. Polar residues predominate over residues 177-188; that stretch reads MRNTTSSESVLT. Low complexity-rich tracts occupy residues 197 to 213 and 326 to 344; these read SIHS…SQPG and SGKS…SGVS. The residue at position 411 (S411) is a Phosphoserine. Polar residues predominate over residues 536 to 549; the sequence is FEGNSVSEGRTTPS. Positions 536 to 580 are disordered; sequence FEGNSVSEGRTTPSDVERDVTSLNESEPPGVRDRRDSGVGASLTR. One can recognise a Rho-GAP domain in the interval 663–868; sequence VPLIVHVQRT…HMIMECDRLF (206 aa). In terms of domain architecture, START spans 899–1107; that stretch reads LEESGATFHT…RNSFQPLIAE (209 aa).

Homodimer. Interacts with TAX1BP1. In terms of tissue distribution, ubiquitously expressed. Underexpressed in hepatocellular carcinoma cells and some breast cancer cell lines.

The protein localises to the cytoplasm. It localises to the membrane. The protein resides in the mitochondrion membrane. Its subcellular location is the lipid droplet. GTPase-activating protein for RhoA, and perhaps for Cdc42. May be involved in regulation of cytoskeletal reorganization, cell proliferation and cell motility. Acts a tumor suppressor in hepatocellular carcinoma cells. The sequence is that of StAR-related lipid transfer protein 13 (STARD13) from Homo sapiens (Human).